The sequence spans 206 residues: Ribosomal RNA small subunit methyltransferase G (206 aa).

S-adenosyl-L-methionine-binding positions include Gly74, Leu79, 125–126, and Arg140; that span reads VE.

The protein belongs to the methyltransferase superfamily. RNA methyltransferase RsmG family.

The protein localises to the cytoplasm. The enzyme catalyses guanosine(527) in 16S rRNA + S-adenosyl-L-methionine = N(7)-methylguanosine(527) in 16S rRNA + S-adenosyl-L-homocysteine. Its function is as follows. Specifically methylates the N7 position of guanine in position 527 of 16S rRNA. In Shewanella frigidimarina (strain NCIMB 400), this protein is Ribosomal RNA small subunit methyltransferase G.